Reading from the N-terminus, the 415-residue chain is L-cysteine:1D-myo-inositol 2-amino-2-deoxy-alpha-D-glucopyranoside ligase (415 aa).

A Zn(2+)-binding site is contributed by C43. L-cysteinyl-5'-AMP contacts are provided by residues 43 to 46, T58, and 81 to 83; these read CGIT and NVT. The short motif at 45-55 is the 'HIGH' region element; the sequence is ITPYDATHLGH. Positions 188–193 match the 'ERGGDP' region motif; sequence ERGGDP. L-cysteinyl-5'-AMP is bound at residue W229. Position 233 (C233) interacts with Zn(2+). 251 to 253 contributes to the L-cysteinyl-5'-AMP binding site; it reads GSD. A Zn(2+)-binding site is contributed by H258. An L-cysteinyl-5'-AMP-binding site is contributed by V285. The short motif at 291-295 is the 'KMSKS' region element; the sequence is KMSKS.

It belongs to the class-I aminoacyl-tRNA synthetase family. MshC subfamily. Monomer. The cofactor is Zn(2+).

The catalysed reaction is 1D-myo-inositol 2-amino-2-deoxy-alpha-D-glucopyranoside + L-cysteine + ATP = 1D-myo-inositol 2-(L-cysteinylamino)-2-deoxy-alpha-D-glucopyranoside + AMP + diphosphate + H(+). Catalyzes the ATP-dependent condensation of GlcN-Ins and L-cysteine to form L-Cys-GlcN-Ins. The polypeptide is L-cysteine:1D-myo-inositol 2-amino-2-deoxy-alpha-D-glucopyranoside ligase (Cellulomonas flavigena (strain ATCC 482 / DSM 20109 / BCRC 11376 / JCM 18109 / NBRC 3775 / NCIMB 8073 / NRS 134)).